The chain runs to 123 residues: Holo-[acyl-carrier-protein] synthase (123 aa).

Mg(2+)-binding residues include Asp-8 and Glu-60.

This sequence belongs to the P-Pant transferase superfamily. AcpS family. Mg(2+) is required as a cofactor.

It is found in the cytoplasm. The enzyme catalyses apo-[ACP] + CoA = holo-[ACP] + adenosine 3',5'-bisphosphate + H(+). Transfers the 4'-phosphopantetheine moiety from coenzyme A to a Ser of acyl-carrier-protein. This is Holo-[acyl-carrier-protein] synthase from Ehrlichia ruminantium (strain Welgevonden).